Reading from the N-terminus, the 550-residue chain is Chaperonin GroEL (550 aa).

ATP-binding positions include 30–33 (TLGP), Lys-51, 87–91 (DGTTT), Gly-415, and Asp-496.

This sequence belongs to the chaperonin (HSP60) family. Forms a cylinder of 14 subunits composed of two heptameric rings stacked back-to-back. Interacts with the co-chaperonin GroES.

It is found in the cytoplasm. The enzyme catalyses ATP + H2O + a folded polypeptide = ADP + phosphate + an unfolded polypeptide.. Together with its co-chaperonin GroES, plays an essential role in assisting protein folding. The GroEL-GroES system forms a nano-cage that allows encapsulation of the non-native substrate proteins and provides a physical environment optimized to promote and accelerate protein folding. This is Chaperonin GroEL from Rickettsia typhi (strain ATCC VR-144 / Wilmington).